Consider the following 75-residue polypeptide: Tautomerase PptA (75 aa).

P2 acts as the Proton acceptor; via imino nitrogen in catalysis.

This sequence belongs to the 4-oxalocrotonate tautomerase family. PptA subfamily. Homodimer.

It localises to the cytoplasm. The polypeptide is Tautomerase PptA (Escherichia coli O127:H6 (strain E2348/69 / EPEC)).